A 471-amino-acid polypeptide reads, in one-letter code: Uronate isomerase (471 aa).

Belongs to the metallo-dependent hydrolases superfamily. Uronate isomerase family.

The enzyme catalyses D-glucuronate = D-fructuronate. It carries out the reaction aldehydo-D-galacturonate = keto-D-tagaturonate. The protein operates within carbohydrate metabolism; pentose and glucuronate interconversion. This chain is Uronate isomerase, found in Latilactobacillus sakei subsp. sakei (strain 23K) (Lactobacillus sakei subsp. sakei).